The sequence spans 475 residues: Ribulose bisphosphate carboxylase large chain (475 aa).

Positions 1–2 are excised as a propeptide; the sequence is MS. At Pro3 the chain carries N-acetylproline. Lys14 carries the N6,N6,N6-trimethyllysine modification. Substrate-binding residues include Asn123 and Thr173. The Proton acceptor role is filled by Lys175. Lys177 lines the substrate pocket. The Mg(2+) site is built by Lys201, Asp203, and Glu204. Lys201 is subject to N6-carboxylysine. His294 serves as the catalytic Proton acceptor. Substrate contacts are provided by Arg295, His327, and Ser379.

It belongs to the RuBisCO large chain family. Type I subfamily. In terms of assembly, heterohexadecamer of 8 large chains and 8 small chains; disulfide-linked. The disulfide link is formed within the large subunit homodimers. It depends on Mg(2+) as a cofactor. Post-translationally, the disulfide bond which can form in the large chain dimeric partners within the hexadecamer appears to be associated with oxidative stress and protein turnover.

The protein resides in the plastid. It is found in the chloroplast. The enzyme catalyses 2 (2R)-3-phosphoglycerate + 2 H(+) = D-ribulose 1,5-bisphosphate + CO2 + H2O. The catalysed reaction is D-ribulose 1,5-bisphosphate + O2 = 2-phosphoglycolate + (2R)-3-phosphoglycerate + 2 H(+). Functionally, ruBisCO catalyzes two reactions: the carboxylation of D-ribulose 1,5-bisphosphate, the primary event in carbon dioxide fixation, as well as the oxidative fragmentation of the pentose substrate in the photorespiration process. Both reactions occur simultaneously and in competition at the same active site. This chain is Ribulose bisphosphate carboxylase large chain (rbcL), found in Cucumis sativus (Cucumber).